Here is a 64-residue protein sequence, read N- to C-terminus: Large ribosomal subunit protein bL28 (64 aa).

The segment at 1–23 is disordered; that stretch reads MARKDQISHRGPLSGNNRSHALN.

The protein belongs to the bacterial ribosomal protein bL28 family.

The sequence is that of Large ribosomal subunit protein bL28 from Mesomycoplasma hyopneumoniae (strain J / ATCC 25934 / NCTC 10110) (Mycoplasma hyopneumoniae).